We begin with the raw amino-acid sequence, 1273 residues long: Paired amphipathic helix protein Sin3a (1273 aa).

Disordered regions lie at residues 1–23 and 87–110; these read MKRR…IPGS and HPTA…PPVA. Phosphoserine is present on Ser-10. Residues 119-189 form the PAH 1 domain; it reads QRLKVEDALS…MGFNTFLPPG (71 aa). The segment at 119–196 is interaction with HCFC1; that stretch reads QRLKVEDALS…PPGYKIEVQT (78 aa). Glycyl lysine isopeptide (Lys-Gly) (interchain with G-Cter in SUMO2) cross-links involve residues Lys-122 and Lys-134. The tract at residues 205–297 is disordered; it reads PGQVHQIPTH…ISLGTAPSLQ (93 aa). The segment at 205-480 is interaction with REST; sequence PGQVHQIPTH…RKALRSAEAY (276 aa). Residues 228–237 are compositionally biased toward low complexity; the sequence is SQPSAQSAPA. Residues 238-248 show a composition bias toward pro residues; that stretch reads PAQPAPQPPPA. Positions 252 to 266 are enriched in polar residues; it reads KPSQLQAHTPASQQT. Over residues 267–282 the composition is skewed to pro residues; that stretch reads PPLPPYASPRSPPVQP. Position 277 is a phosphoserine (Ser-277). Thr-284 carries the post-translational modification Phosphothreonine. Residues 284–297 show a composition bias toward polar residues; it reads TPVTISLGTAPSLQ. The PAH 2 domain maps to 300-383; that stretch reads QPVEFNHAIN…SEFGQFLPDA (84 aa). Residues 398–446 form a disordered region; it reads DSVRNDHGGTVKKPQLNNKPQRPSQNGCQIRRHPTGTTPPVKKKPKLLN. A compositionally biased stretch (polar residues) spans 412–425; sequence QLNNKPQRPSQNGC. The 70-residue stretch at 456–525 folds into the PAH 3 domain; it reads SKHGGGTESL…NWFKNFLGYK (70 aa). Residues 458 to 525 form an interaction with SAP30 region; that stretch reads HGGGTESLFF…NWFKNFLGYK (68 aa). Lys-469 bears the N6-acetyllysine mark. Residues 523–850 form an interaction with NCOR1 region; the sequence is GYKESVHLET…EMDVDEATGA (328 aa). The interval 524–659 is interaction with SUDS3 and SAP130; it reads YKESVHLETY…KFRLDNTLGG (136 aa). Lys-563 is covalently cross-linked (Glycyl lysine isopeptide (Lys-Gly) (interchain with G-Cter in SUMO2)). Residues 687-829 are interaction with HDAC1 and ARID4B; that stretch reads NPSIAVPIVL…IPDLLFAQRG (143 aa). 2 positions are modified to phosphoserine: Ser-832 and Ser-860. 2 positions are modified to N6-acetyllysine: Lys-865 and Lys-875. The interaction with OGT stretch occupies residues 888 to 967; the sequence is VNNNWYIFMR…YYPAFLDMVR (80 aa). Positions 903–932 form a coiled coil; sequence CLRLLRICSQAERQIEEENREREWEREVLG. Ser-940, Ser-1089, and Ser-1112 each carry phosphoserine. The tract at residues 1136–1156 is disordered; sequence CQRGREQQEKEGKEGNSKKTM. Residues 1138–1156 are compositionally biased toward basic and acidic residues; that stretch reads RGREQQEKEGKEGNSKKTM.

As to quaternary structure, interacts with ARID4B, BRMS1L, HCFC1, HDAC1, HDAC2, MXI1, SAP30L, SAP130, SFPQ and TOPORS. Interacts with OGT (via TPRs 1-6); the interaction mediates transcriptional repression in parallel with histone deacetylase. Interacts with BAZ2A, MXD1, MXD3, MXD4, MBD2, DACH1, NCOR1, NR4A2, REST, RLIM, SAP30, SETDB1, SMYD2, and SUDS3. Interacts with PHF12 in a complex composed of HDAC1, PHF12 and SAP30. Interacts with TET1; the interaction recruits SIN3A to gene promoters. The large PER complex involved in the histone deacetylation is composed of at least HDAC1, PER2, SFPQ and SIN3A. Interacts with KLF11. Interacts with PPHLN1. Found in a complex with YY1, GON4L and HDAC1. Interacts (via PAH2) with FOXK1. Interacts with FOXK2. Found in a complex composed of at least SINHCAF, SIN3A, HDAC1, SAP30, RBBP4, OGT and TET1. Interacts with SINHCAF. Interacts with SPHK2. SUMO1 sumoylated by TOPORS. Probably desumoylated by SENP2. In terms of tissue distribution, expressed in the developing brain, with highest levels of expression detected in the ventricular zone of various cortical regions.

It is found in the nucleus. Its subcellular location is the nucleolus. Functionally, acts as a transcriptional repressor. Corepressor for REST. Interacts with MXI1 to repress MYC responsive genes and antagonize MYC oncogenic activities. Also interacts with MXD1-MAX heterodimers to repress transcription by tethering SIN3A to DNA. Acts cooperatively with OGT to repress transcription in parallel with histone deacetylation. Involved in the control of the circadian rhythms. Required for the transcriptional repression of circadian target genes, such as PER1, mediated by the large PER complex through histone deacetylation. Cooperates with FOXK1 to regulate cell cycle progression probably by repressing cell cycle inhibitor genes expression. Required for cortical neuron differentiation and callosal axon elongation. This Homo sapiens (Human) protein is Paired amphipathic helix protein Sin3a.